A 143-amino-acid polypeptide reads, in one-letter code: Large ribosomal subunit protein uL13 (143 aa).

This sequence belongs to the universal ribosomal protein uL13 family. Part of the 50S ribosomal subunit.

Its function is as follows. This protein is one of the early assembly proteins of the 50S ribosomal subunit, although it is not seen to bind rRNA by itself. It is important during the early stages of 50S assembly. This chain is Large ribosomal subunit protein uL13, found in Prochlorococcus marinus (strain MIT 9301).